A 396-amino-acid polypeptide reads, in one-letter code: Elongation factor Tu 2 (396 aa).

The tr-type G domain occupies 10-206 (KPHCNVGTIG…AVDDYIPQPE (197 aa)). A G1 region spans residues 19 to 26 (GHVDHGKT). 19-26 (GHVDHGKT) provides a ligand contact to GTP. A Mg(2+)-binding site is contributed by Thr26. The segment at 60-64 (GITIS) is G2. Positions 81–84 (DCPG) are G3. GTP contacts are provided by residues 81-85 (DCPGH) and 136-139 (NKCD). A G4 region spans residues 136–139 (NKCD). A G5 region spans residues 174–176 (SAL).

It belongs to the TRAFAC class translation factor GTPase superfamily. Classic translation factor GTPase family. EF-Tu/EF-1A subfamily. Monomer.

It is found in the cytoplasm. The enzyme catalyses GTP + H2O = GDP + phosphate + H(+). GTP hydrolase that promotes the GTP-dependent binding of aminoacyl-tRNA to the A-site of ribosomes during protein biosynthesis. The polypeptide is Elongation factor Tu 2 (Rhodospirillum rubrum (strain ATCC 11170 / ATH 1.1.1 / DSM 467 / LMG 4362 / NCIMB 8255 / S1)).